Reading from the N-terminus, the 769-residue chain is Probable beta-glucosidase M (769 aa).

Residues Met-1–Ser-22 form the signal peptide. N-linked (GlcNAc...) asparagine glycans are attached at residues Asn-28, Asn-75, and Asn-262. Residue Asp-290 is part of the active site. Asn-318, Asn-325, Asn-437, and Asn-546 each carry an N-linked (GlcNAc...) asparagine glycan.

It belongs to the glycosyl hydrolase 3 family.

It is found in the secreted. It carries out the reaction Hydrolysis of terminal, non-reducing beta-D-glucosyl residues with release of beta-D-glucose.. It participates in glycan metabolism; cellulose degradation. Beta-glucosidases are one of a number of cellulolytic enzymes involved in the degradation of cellulosic biomass. Catalyzes the last step releasing glucose from the inhibitory cellobiose. In Neosartorya fischeri (strain ATCC 1020 / DSM 3700 / CBS 544.65 / FGSC A1164 / JCM 1740 / NRRL 181 / WB 181) (Aspergillus fischerianus), this protein is Probable beta-glucosidase M (bglM).